The primary structure comprises 159 residues: Endoribonuclease YbeY (159 aa).

H125, H129, and H135 together coordinate Zn(2+).

Belongs to the endoribonuclease YbeY family. The cofactor is Zn(2+).

It is found in the cytoplasm. Its function is as follows. Single strand-specific metallo-endoribonuclease involved in late-stage 70S ribosome quality control and in maturation of the 3' terminus of the 16S rRNA. The sequence is that of Endoribonuclease YbeY from Brevibacillus brevis (strain 47 / JCM 6285 / NBRC 100599).